The following is a 329-amino-acid chain: Peroxidase 58 (329 aa).

Positions 1–23 are cleaved as a signal peptide; it reads MGLSKTIPLVLLPILMFGVLSNA. Cystine bridges form between cysteine 34–cysteine 116, cysteine 67–cysteine 72, cysteine 122–cysteine 325, and cysteine 201–cysteine 234. N-linked (GlcNAc...) asparagine glycosylation occurs at asparagine 36. Residue histidine 65 is the Proton acceptor of the active site. Ca(2+) contacts are provided by aspartate 66, valine 69, glycine 71, aspartate 73, and serine 75. A substrate-binding site is contributed by proline 164. Residue histidine 194 coordinates heme b. Threonine 195 lines the Ca(2+) pocket. The N-linked (GlcNAc...) asparagine glycan is linked to asparagine 210. Residues aspartate 247, serine 250, and aspartate 255 each contribute to the Ca(2+) site.

This sequence belongs to the peroxidase family. Classical plant (class III) peroxidase subfamily. The cofactor is heme b. It depends on Ca(2+) as a cofactor.

It is found in the secreted. The catalysed reaction is 2 a phenolic donor + H2O2 = 2 a phenolic radical donor + 2 H2O. Functionally, removal of H(2)O(2), oxidation of toxic reductants, biosynthesis and degradation of lignin, suberization, auxin catabolism, response to environmental stresses such as wounding, pathogen attack and oxidative stress. These functions might be dependent on each isozyme/isoform in each plant tissue. This chain is Peroxidase 58 (PER58), found in Arabidopsis thaliana (Mouse-ear cress).